The sequence spans 397 residues: 3-ketoacyl-CoA thiolase, mitochondrial (397 aa).

The transit peptide at 1–16 (MALLRGVFIVAAKRTP) directs the protein to the mitochondrion; not cleaved. Lys-25 carries the N6-acetyllysine; alternate modification. N6-succinyllysine; alternate is present on Lys-25. Position 45 is an N6-succinyllysine (Lys-45). The active-site Acyl-thioester intermediate is the Cys-92. Position 119 is a phosphothreonine (Thr-119). Ser-121 is subject to Phosphoserine. Position 127 is a phosphotyrosine (Tyr-127). Thr-136 bears the Phosphothreonine mark. Residues Lys-137, Lys-143, Lys-158, Lys-171, Lys-191, and Lys-209 each carry the N6-acetyllysine; alternate modification. Lys-137, Lys-143, Lys-158, Lys-171, Lys-191, and Lys-209 each carry N6-succinyllysine; alternate. Residues Lys-211, Lys-212, and Lys-214 each carry the N6-succinyllysine modification. Positions 224 and 227 each coordinate CoA. The residue at position 240 (Lys-240) is an N6-succinyllysine. Lys-241 carries the N6-acetyllysine modification. Residue Ser-251 coordinates CoA. Residues Lys-269 and Lys-270 each carry the N6-acetyllysine modification. The residue at position 305 (Lys-305) is an N6-acetyllysine; alternate. Lys-305 is subject to N6-succinyllysine; alternate. The residue at position 310 (Ser-310) is a Phosphoserine. Residue Lys-312 is modified to N6-acetyllysine; alternate. Position 312 is an N6-succinyllysine; alternate (Lys-312). Phosphoserine is present on Ser-333. Position 340 is an N6-acetyllysine (Lys-340). Ser-344 is modified (phosphoserine). Lys-375 is subject to N6-acetyllysine. Cys-382 (proton donor/acceptor) is an active-site residue.

This sequence belongs to the thiolase-like superfamily. Thiolase family. Homotetramer. Interacts with BNIP3. As to expression, expressed in liver, brown adipose tissue and heart (at protein level).

It localises to the mitochondrion. It catalyses the reaction an acyl-CoA + acetyl-CoA = a 3-oxoacyl-CoA + CoA. The enzyme catalyses 2 acetyl-CoA = acetoacetyl-CoA + CoA. It carries out the reaction acetyl-CoA + H2O = acetate + CoA + H(+). The catalysed reaction is propanoyl-CoA + H2O = propanoate + CoA + H(+). It catalyses the reaction butanoyl-CoA + H2O = butanoate + CoA + H(+). The enzyme catalyses hexanoyl-CoA + H2O = hexanoate + CoA + H(+). It carries out the reaction octanoyl-CoA + H2O = octanoate + CoA + H(+). The catalysed reaction is decanoyl-CoA + H2O = decanoate + CoA + H(+). It catalyses the reaction dodecanoyl-CoA + H2O = dodecanoate + CoA + H(+). The enzyme catalyses tetradecanoyl-CoA + H2O = tetradecanoate + CoA + H(+). It carries out the reaction hexadecanoyl-CoA + H2O = hexadecanoate + CoA + H(+). Its pathway is lipid metabolism; fatty acid beta-oxidation. The 3-oxoacetyl-CoA thiolase activity is inhibited by acetyl-CoA while the acetyl-CoA hydrolase activity is inhibited by acetoacetyl-CoA. In the production of energy from fats, this is one of the enzymes that catalyzes the last step of the mitochondrial beta-oxidation pathway, an aerobic process breaking down fatty acids into acetyl-CoA. Using free coenzyme A/CoA, catalyzes the thiolytic cleavage of medium- to long-chain unbranched 3-oxoacyl-CoAs into acetyl-CoA and a fatty acyl-CoA shortened by two carbon atoms. Also catalyzes the condensation of two acetyl-CoA molecules into acetoacetyl-CoA and could be involved in the production of ketone bodies. Also displays hydrolase activity on various fatty acyl-CoAs. Thereby, could be responsible for the production of acetate in a side reaction to beta-oxidation. Abolishes BNIP3-mediated apoptosis and mitochondrial damage. This is 3-ketoacyl-CoA thiolase, mitochondrial (Acaa2) from Rattus norvegicus (Rat).